Here is a 235-residue protein sequence, read N- to C-terminus: Large ribosomal subunit protein uL2 (235 aa).

The interval 197-218 is disordered; it reads VAMNPVDHPHGGGEGKTSGGRH.

This sequence belongs to the universal ribosomal protein uL2 family. Part of the 50S ribosomal subunit. Forms a bridge to the 30S subunit in the 70S ribosome.

Functionally, one of the primary rRNA binding proteins. Required for association of the 30S and 50S subunits to form the 70S ribosome, for tRNA binding and peptide bond formation. It has been suggested to have peptidyltransferase activity; this is somewhat controversial. Makes several contacts with the 16S rRNA in the 70S ribosome. The sequence is that of Large ribosomal subunit protein uL2 (rplB) from Carsonella ruddii (strain PV).